The following is a 354-amino-acid chain: Rhodopsin (354 aa).

The Extracellular portion of the chain corresponds to Met-1–Lys-36. 2 N-linked (GlcNAc...) asparagine glycosylation sites follow: Asn-2 and Asn-15. Residues Tyr-37–Val-61 traverse the membrane as a helical segment. Topologically, residues Thr-62 to Asn-73 are cytoplasmic. The chain crosses the membrane as a helical span at residues Tyr-74–Tyr-96. The Extracellular segment spans residues Thr-97–Cys-110. Cysteines 110 and 187 form a disulfide. A helical transmembrane segment spans residues Tyr-111–Ile-133. The 'Ionic lock' involved in activated form stabilization signature appears at Glu-134 to Tyr-136. Residues Glu-134–His-152 are Cytoplasmic-facing. A helical membrane pass occupies residues Ala-153–Phe-173. Residues Gly-174–Ser-202 are Extracellular-facing. A helical transmembrane segment spans residues Phe-203–Gly-224. The Cytoplasmic portion of the chain corresponds to Arg-225–Arg-252. The chain crosses the membrane as a helical span at residues Met-253–Tyr-274. At Ile-275–Ile-286 the chain is on the extracellular side. A helical transmembrane segment spans residues Phe-287 to Met-308. An N6-(retinylidene)lysine modification is found at Lys-296. Topologically, residues Leu-309–Ala-354 are cytoplasmic. 2 S-palmitoyl cysteine lipidation sites follow: Cys-322 and Cys-323. Positions Glu-331–Ala-354 are disordered. The span at Ser-334–Ala-354 shows a compositional bias: low complexity.

The protein belongs to the G-protein coupled receptor 1 family. Opsin subfamily. Post-translationally, contains one covalently linked retinal chromophore. Upon light absorption, the covalently bound 11-cis-retinal is converted to all-trans-retinal. After hydrolysis of the Schiff base and release of the covalently bound all-trans-retinal, active rhodopsin is regenerated by binding of a fresh molecule of 11-cis-retinal. As to expression, retina. Localized in the ventral part of the retina.

The protein localises to the membrane. It is found in the cell projection. Its subcellular location is the cilium. The protein resides in the photoreceptor outer segment. Photoreceptor required for image-forming vision at low light intensity. Required for photoreceptor cell viability after birth. May use a mixture of retinal and 3-dehydroretinal as visual pigment. Light-induced isomerization of 11-cis to all-trans retinal triggers a conformational change that activates signaling via G-proteins. Subsequent receptor phosphorylation mediates displacement of the bound G-protein alpha subunit by arrestin and terminates signaling. In Aquarana catesbeiana (American bullfrog), this protein is Rhodopsin (RHO).